The primary structure comprises 1458 residues: Secretory phospholipase A2 receptor (1458 aa).

The N-terminal stretch at 1-23 is a signal peptide; sequence MLLSLLLLLLLGAPRRCTEGAAA. At 24–1393 the chain is on the extracellular side; the sequence is ALSPERVLKW…EHPGKGPSHS (1370 aa). 17 disulfide bridges follow: cysteine 49–cysteine 62, cysteine 87–cysteine 104, cysteine 176–cysteine 202, cysteine 190–cysteine 217, cysteine 258–cysteine 352, cysteine 328–cysteine 344, cysteine 404–cysteine 499, cysteine 476–cysteine 491, cysteine 615–cysteine 632, cysteine 697–cysteine 794, cysteine 772–cysteine 786, cysteine 838–cysteine 935, cysteine 912–cysteine 927, cysteine 1065–cysteine 1085, cysteine 1207–cysteine 1221, cysteine 1278–cysteine 1373, and cysteine 1350–cysteine 1365. Residues 49-113 form the Ricin B-type lectin domain; it reads CIQAGKSVLT…CDSTHVSLRW (65 aa). N-linked (GlcNAc...) asparagine glycosylation is present at asparagine 91. The Fibronectin type-II domain maps to 171–219; it reads AHGTPCMFPFQYNHQWHHECTREGRQDDSLWCATTSRYERDEKWGFCPD. 8 C-type lectin domains span residues 227-356, 374-502, 511-645, 660-798, 815-939, 954-1098, 1117-1231, and 1243-1376; these read CDAV…KKYL, TDCE…CKKP, SGCQ…KQPV, HPCY…KIPR, LFHQ…KRKT, GTCP…EKIQ, LEYG…AICH, and ELCS…CKMK. N-linked (GlcNAc...) asparagine glycosylation is found at asparagine 408, asparagine 431, and asparagine 452. The helical transmembrane segment at 1394–1416 threads the bilayer; that stretch reads IVPLAVALTLVVILAIITLSFYI. At 1417–1458 the chain is on the cytoplasmic side; it reads YKQNKGFFRRLAGVGNSYYPTTNFSTIHLEENILISDLEKND. Positions 1432 to 1438 match the Endocytosis signal motif; sequence NSYYPTT.

In terms of assembly, interacts with sPLA2-IB/PLA2G1B; this interaction mediates intracellular signaling as well as clearance of extracellular sPLA2-IB/PLA2G1B via endocytotic pathway. Interacts with sPLA2-X/PLA2G10; this interaction mediates sPLA2-X/PLA2G10 clearance and inactivation. The secretory phospholipase A2 receptor form may be produced by the action of metalloproteinases. It contains all extracellular domains and only lacks transmembrane and cytosolic regions. It is however unclear whether this form is produced by proteolytic cleavage as suggested by some experiments, or by alternative splicing. Lung, skeletal muscle, brain, kidney and heart.

It localises to the cell membrane. It is found in the secreted. Its function is as follows. Receptor for secretory phospholipase A2 (sPLA2). Also able to bind to snake PA2-like toxins. Although its precise function remains unclear, binding of sPLA2 to its receptor participates in both positive and negative regulation of sPLA2 functions as well as clearance of sPLA2. Binding of sPLA2-IB/PLA2G1B induces various effects depending on the cell type, such as activation of the mitogen-activated protein kinase (MAPK) cascade to induce cell proliferation, the production of lipid mediators, selective release of arachidonic acid in bone marrow-derived mast cells. In neutrophils, binding of sPLA2-IB/PLA2G1B can activate p38 MAPK to stimulate elastase release and cell adhesion. May be involved in responses in pro-inflammatory cytokine productions during endotoxic shock. Also has endocytic properties and rapidly internalizes sPLA2 ligands, which is particularly important for the clearance of extracellular sPLA2s to protect their potent enzymatic activities. The soluble secretory phospholipase A2 receptor form is circulating and acts as a negative regulator of sPLA2 functions by blocking the biological functions of sPLA2-IB/PLA2G1B and sPLA2-X/PLA2G10. In Oryctolagus cuniculus (Rabbit), this protein is Secretory phospholipase A2 receptor (PLA2R1).